A 541-amino-acid chain; its full sequence is Chaperonin GroEL (541 aa).

ATP-binding positions include 29–32, 86–90, glycine 413, 476–478, and aspartate 492; these read TLGP, DGTTT, and NAA. The disordered stretch occupies residues 521–541; it reads KPEDNPAPAAPAANPGMGGMM. The segment covering 526–535 has biased composition (low complexity); it reads PAPAAPAANP.

The protein belongs to the chaperonin (HSP60) family. In terms of assembly, forms a cylinder of 14 subunits composed of two heptameric rings stacked back-to-back. Interacts with the co-chaperonin GroES.

It localises to the cytoplasm. The catalysed reaction is ATP + H2O + a folded polypeptide = ADP + phosphate + an unfolded polypeptide.. Functionally, together with its co-chaperonin GroES, plays an essential role in assisting protein folding. The GroEL-GroES system forms a nano-cage that allows encapsulation of the non-native substrate proteins and provides a physical environment optimized to promote and accelerate protein folding. The sequence is that of Chaperonin GroEL from Levilactobacillus brevis (strain ATCC 367 / BCRC 12310 / CIP 105137 / JCM 1170 / LMG 11437 / NCIMB 947 / NCTC 947) (Lactobacillus brevis).